The chain runs to 1683 residues: Genome polyprotein (1683 aa).

Topologically, residues 1–445 (MRCIGISNRD…LHQVFGAIYG (445 aa)) are extracellular. Intrachain disulfides connect Cys3/Cys30, Cys60/Cys121, Cys74/Cys105, and Cys92/Cys116. Residue Asn67 is glycosylated (N-linked (GlcNAc...) asparagine; by host). Residues 98-111 (DRGWGNGCGLFGKG) form a fusion peptide region. N-linked (GlcNAc...) asparagine; by host glycosylation occurs at Asn153. 2 cysteine pairs are disulfide-bonded: Cys185–Cys285 and Cys302–Cys333. Residues 446 to 466 (AAFSGVSWTMKILIGVIITWI) traverse the membrane as a helical segment. At 467-472 (GMNSRS) the chain is on the cytoplasmic side. Residues 473 to 493 (TSLSVSLVLVGIVTLYLGVMV) traverse the membrane as a helical segment. Over 494–915 (QADSGCVVSW…MVGATMTDDI (422 aa)) the chain is Extracellular. 6 disulfides stabilise this stretch: Cys499–Cys510, Cys550–Cys638, Cys674–Cys718, Cys775–Cys824, Cys786–Cys808, and Cys807–Cys811. N-linked (GlcNAc...) asparagine; by host glycosylation occurs at Asn702. The chain crosses the membrane as a helical span at residues 916-940 (GMGVTYLALLAAFRVRPTFAAGLLL). Over 941–946 (RKLTSK) the chain is Cytoplasmic. Residues 947-965 (ELMMTTIGIVLLSQSSIPE) form a helical membrane-spanning segment. Topologically, residues 966-989 (TILELTDALALGMMVLKMVRNMEK) are lumenal. The chain crosses the membrane as a helical span at residues 990 to 1010 (YQLAVTIMAILCVPNAVILQN). Position 1011 (Ala1011) is a topological domain, cytoplasmic. A helical membrane pass occupies residues 1012–1030 (WKVSCTILAVVSVSPLLLT). The Lumenal portion of the chain corresponds to 1031–1037 (SSQQKAD). Residues 1038–1058 (WIPLALTIKGLNPTAIFLTTL) traverse the membrane as a helical segment. The Cytoplasmic segment spans residues 1059 to 1683 (SRTSKKRAGV…EFKEFAAGRK (625 aa)). A Peptidase S7 domain is found at 1066–1243 (AGVLWDVPSP…EKSIEDNPEI (178 aa)). Active-site charge relay system; for serine protease NS3 activity residues include His1116, Asp1140, and Ser1200. One can recognise a Helicase ATP-binding domain in the interval 1245-1401 (DDIFRKRRLT…QSNAPIMDEE (157 aa)). Residues 1249–1252 (RKRR) are important for RNA-binding. 1258-1265 (LHPGAGKT) is a binding site for ATP. The short motif at 1349–1352 (DEAH) is the DEAH box element. Positions 1411 to 1582 (SGHEWVTDFK…IFEPEREKVD (172 aa)) constitute a Helicase C-terminal domain.

Capsid protein C: Homodimer. Interacts (via N-terminus) with host EXOC1 (via C-terminus); this interaction results in EXOC1 degradation through the proteasome degradation pathway. Protein prM: Forms heterodimers with envelope protein E in the endoplasmic reticulum and Golgi. As to quaternary structure, homodimer; in the endoplasmic reticulum and Golgi. Interacts with protein prM. Interacts with non-structural protein 1. In terms of assembly, homodimer; Homohexamer when secreted. Interacts with envelope protein E. Interacts (via N-terminus) with serine protease NS3. Non-structural protein 2B: Forms a heterodimer with serine protease NS3. May form homooligomers. As to quaternary structure, forms a heterodimer with NS2B. Interacts with NS4B. Interacts with unphosphorylated RNA-directed RNA polymerase NS5; this interaction stimulates RNA-directed RNA polymerase NS5 guanylyltransferase activity. Interacts with host SHFL. Post-translationally, specific enzymatic cleavages in vivo yield mature proteins. Cleavages in the lumen of endoplasmic reticulum are performed by host signal peptidase, wereas cleavages in the cytoplasmic side are performed by the Serine protease NS3. Signal cleavage at the 2K-4B site requires a prior NS3 protease-mediated cleavage at the 4A-2K site. N-glycosylated. The excreted form is glycosylated and this is required for efficient secretion of the protein from infected cells. In terms of processing, N-glycosylated. Post-translationally, specific enzymatic cleavages in vivo yield mature proteins. Cleavages in the lumen of endoplasmic reticulum are performed by host signal peptidase, wereas cleavages in the cytoplasmic side are performed by serine protease NS3. Signal cleavage at the 2K-4B site requires a prior NS3 protease-mediated cleavage at the 4A-2K site.

The protein resides in the virion membrane. It localises to the host endoplasmic reticulum membrane. It is found in the secreted. It catalyses the reaction Selective hydrolysis of -Xaa-Xaa-|-Yaa- bonds in which each of the Xaa can be either Arg or Lys and Yaa can be either Ser or Ala.. The catalysed reaction is a ribonucleoside 5'-triphosphate + H2O = a ribonucleoside 5'-diphosphate + phosphate + H(+). It carries out the reaction ATP + H2O = ADP + phosphate + H(+). Its function is as follows. Binds to host cell surface receptor and mediates fusion between viral and cellular membranes. Envelope protein is synthesized in the endoplasmic reticulum in the form of heterodimer with protein prM. They play a role in virion budding in the ER, and the newly formed immature particle is covered with 60 spikes composed of heterodimer between precursor prM and envelope protein E. The virion is transported to the Golgi apparatus where the low pH causes dissociation of PrM-E heterodimers and formation of E homodimers. prM-E cleavage is inefficient, and many virions are only partially matured. These uncleaved prM would play a role in immune evasion. Functionally, involved in immune evasion, pathogenesis and viral replication. Once cleaved off the polyprotein, is targeted to three destinations: the viral replication cycle, the plasma membrane and the extracellular compartment. Essential for viral replication. Required for formation of the replication complex and recruitment of other non-structural proteins to the ER-derived membrane structures. Excreted as a hexameric lipoparticle that plays a role against host immune response. Antagonizing the complement function. Binds to the host macrophages and dendritic cells. Inhibits signal transduction originating from Toll-like receptor 3 (TLR3). In terms of biological role, disrupts the host endothelial glycocalyx layer of host pulmonary microvascular endothelial cells, inducing degradation of sialic acid and shedding of heparan sulfate proteoglycans. NS1 induces expression of sialidases, heparanase, and activates cathepsin L, which activates heparanase via enzymatic cleavage. These effects are probably linked to the endothelial hyperpermeability observed in severe dengue disease. Component of the viral RNA replication complex that functions in virion assembly and antagonizes the host immune response. Its function is as follows. Serine protease subunit NS2B: Required cofactor for the serine protease function of NS3. May have membrane-destabilizing activity and form viroporins. Functionally, displays three enzymatic activities: serine protease, NTPase and RNA helicase. NS3 serine protease, in association with NS2B, performs its autocleavage and cleaves the polyprotein at dibasic sites in the cytoplasm: C-prM, NS2A-NS2B, NS2B-NS3, NS3-NS4A, NS4A-2K and NS4B-NS5. NS3 RNA helicase binds RNA and unwinds dsRNA in the 3' to 5' direction. This is Genome polyprotein from Aedimorphus (Red guenon).